The chain runs to 763 residues: Endoplasmic reticulum membrane sensor NFE2L1 (763 aa).

The chain crosses the membrane as a helical; Signal-anchor for type II membrane protein span at residues 7–24 (YLTEGLLQFTILLSLIGV). Residues 108-150 (DPEGSVSGSQPSSGLALESSSGLQDVTGPDNGVRESETEQGFS) are disordered. The span at 116-131 (SQPSSGLALESSSGLQ) shows a compositional bias: low complexity. The segment at 180–188 (IFDYSHRQK) is cholesterol recognition/amino acid consensus (CRAC) region. N-linked (GlcNAc...) asparagine glycosylation is found at asparagine 338 and asparagine 350. Residues 369–373 (SPEVE) are CPD. Asparagine 413 is a glycosylation site (N-linked (GlcNAc...) asparagine). Disordered regions lie at residues 460–523 (EEEF…DSET) and 585–604 (TLKK…QMSR). Residues 466–470 (DSGLS) carry the Destruction motif motif. The segment covering 466–514 (DSGLSLDSSHSPSSLSSSEGSSSSSSSSSSSSSSSASSSASSSFSEEGA) has biased composition (low complexity). Position 519 is a phosphoserine; by CK2 (serine 519). Basic and acidic residues predominate over residues 589-604 (GSKEKQADFLDKQMSR). Serine 590 bears the Phosphoserine; by PKA mark. Residues 645–708 (LIRDIRRRGK…RQMKQKVQSL (64 aa)) form the bZIP domain. Residues 647-666 (RDIRRRGKNKMAAQNCRKRK) form a basic motif region. Residues 673–687 (LERDVEDLQRDKARL) form a leucine-zipper region. The Nuclear localization signal motif lies at 752-759 (RRQERKPK).

It belongs to the bZIP family. CNC subfamily. In terms of assembly, interacts with KEAP1. As to quaternary structure, interacts (via CPD region) with FBXW7; leading to its ubiquitination and degradation. Interacts with SYVN1/HRD1; leading to its ubiquitination and degradation. Interacts (when ubiquitinated) with DDI2; leading to its cleavage. Interacts (via the bZIP domain) with small MAF protein (MAFF, MAFG or MAFK); required for binding to antioxidant response elements (AREs) on DNA. Interacts (via Destruction motif) with BTRC; leading to its ubiquitination and degradation. Interacts with CEBPB; the heterodimer represses expression of DSPP during odontoblast differentiation. Interacts with MOTS-c, a peptide produced by the mitochondrially encoded 12S rRNA MT-RNR1. In terms of processing, cleaved at Leu-104 by the aspartyl protease DDI2 following retrotranslocation, releasing the protein from the endoplasmic reticulum membrane and forming the transcription factor NRF1 that translocates into the nucleus. Ubiquitination is prerequisite for cleavage by aspartyl protease DDI2. N-glycosylated in normal conditions, when it has a single-pass type II membrane protein topology, with the DNA-binding domain facing the endoplasmic reticulum lumen. Deglycosylated during retrotranslocation to the cytosolic side of the membrane, to have a single-pass type III membrane protein topology with the major part of the protein facing the cytosol. Post-translationally, ubiquitinated by the SCF(FBXW7) complex and SYVN1/HRD1, leading to its degradation by the proteasome. Ubiquitinated during retrotranslocation to the cytosolic side of the membrane: ubiquitination does not lead to degradation and is required for processing by the aspartyl protease DDI2 and subsequent release from the endoplasmic reticulum membrane. In terms of processing, phosphorylation by CK2 at Ser-519 inhibits transcription factor activity, possibly by affecting DNA-binding activity. Phosphorylation at Ser-590 is required for interaction with CEBPB. Ubiquitinated by the SCF(BTRC) complex in the nucleus, leading to its degradation by the proteasome.

It is found in the endoplasmic reticulum membrane. It localises to the nucleus. Its function is as follows. Endoplasmic reticulum membrane sensor that translocates into the nucleus in response to various stresses to act as a transcription factor. Constitutes a precursor of the transcription factor NRF1. Able to detect various cellular stresses, such as cholesterol excess, oxidative stress or proteasome inhibition. In response to stress, it is released from the endoplasmic reticulum membrane following cleavage by the protease DDI2 and translocates into the nucleus to form the transcription factor NRF1. Acts as a key sensor of cholesterol excess: in excess cholesterol conditions, the endoplasmic reticulum membrane form of the protein directly binds cholesterol via its CRAC motif, preventing cleavage and release of the transcription factor NRF1, thereby allowing expression of genes promoting cholesterol removal, such as CD36. Involved in proteasome homeostasis: in response to proteasome inhibition, it is released from the endoplasmic reticulum membrane, translocates to the nucleus and activates expression of genes encoding proteasome subunits. Functionally, CNC-type bZIP family transcription factor that translocates to the nucleus and regulates expression of target genes in response to various stresses. Heterodimerizes with small-Maf proteins (MAFF, MAFG or MAFK) and binds DNA motifs including the antioxidant response elements (AREs), which regulate expression of genes involved in oxidative stress response. Activates or represses expression of target genes, depending on the context. Plays a key role in cholesterol homeostasis by acting as a sensor of cholesterol excess: in low cholesterol conditions, translocates into the nucleus and represses expression of genes involved in defense against cholesterol excess, such as CD36. In excess cholesterol conditions, the endoplasmic reticulum membrane form of the protein directly binds cholesterol via its CRAC motif, preventing cleavage and release of the transcription factor NRF1, thereby allowing expression of genes promoting cholesterol removal. Critical for redox balance in response to oxidative stress: acts by binding the AREs motifs on promoters and mediating activation of oxidative stress response genes, such as GCLC, GCLM, GSS, MT1 and MT2. Plays an essential role during fetal liver hematopoiesis: probably has a protective function against oxidative stress and is involved in lipid homeostasis in the liver. Involved in proteasome homeostasis: in response to proteasome inhibition, mediates the 'bounce-back' of proteasome subunits by translocating into the nucleus and activating expression of genes encoding proteasome subunits. Also involved in regulating glucose flux. Together with CEBPB; represses expression of DSPP during odontoblast differentiation. In response to ascorbic acid induction, activates expression of SP7/Osterix in osteoblasts. The polypeptide is Endoplasmic reticulum membrane sensor NFE2L1 (Bos taurus (Bovine)).